The sequence spans 2211 residues: Coagulation factor V (2211 aa).

The signal sequence occupies residues 1-28 (MFLACPGFWVLVVLGSSWAGWGNLGAEA). 4 Plastocyanin-like domains span residues 30 to 193 (KLRQ…LLIC), 203 to 327 (TQKM…IDIK), 348 to 525 (KRWE…LLIC), and 535 to 686 (IQRA…FRDA). 2 F5/8 type A domains span residues 30 to 327 (KLRQ…IDIK) and 348 to 686 (KRWE…FRDA). The Ca(2+) site is built by D139 and D140. A disulfide bridge connects residues C167 and C193. 5 N-linked (GlcNAc...) asparagine glycosylation sites follow: N225, N239, N297, N382, and N460. C248 and C329 are joined by a disulfide. C499 and C525 are oxidised to a cystine. N-linked (GlcNAc...) asparagine glycosylation is found at N553 and N587. A disulfide bond links C607 and C688. The residue at position 644 (T644) is a Phosphothreonine. Residues 696-1564 (SYEIIYEPSG…PDNIAAWYLR (869 aa)) are b. Sulfotyrosine is present on residues Y697, Y701, and Y730. A propeptide spans 742 to 1564 (SFRNSSLNQE…PDNIAAWYLR (823 aa)) (activation peptide (connecting region)). Residues N745, N756, N774, and N780 are each glycosylated (N-linked (GlcNAc...) asparagine). The interval 814–844 (LEHAGLDKNSALNPPMAEHSSPYSEDPREDH) is disordered. N-linked (GlcNAc...) asparagine glycans are attached at residues N902, N952, and N964. A compositionally biased stretch (polar residues) spans 954–969 (TVNKLPNSPQNDSRTW). The tract at residues 954–1039 (TVNKLPNSPQ…PLSPRSFHPL (86 aa)) is disordered. The segment covering 995-1009 (PLQDRQDRRNSRLKE) has biased composition (basic and acidic residues). N1044, N1053, N1062, N1071, N1078, and N1094 each carry an N-linked (GlcNAc...) asparagine glycan. Disordered regions lie at residues 1084–1162 (SLPD…IPNY) and 1195–1471 (QPSI…FGQT). Polar residues-rich tracts occupy residues 1091-1103 (TSPNDTTSQTSSP) and 1127-1160 (THSTTAPSNRSPDPTHSTTAPSNRSPPTQPSQIP). 30 tandem repeats follow at residues 1124–1137 (SDPTHSTTAPSNRS), 1138–1151 (PDPTHSTTAPSNRS), 1188–1196 (ATSLDLSQP), 1197–1205 (SISPDLGQM), 1206–1214 (ALSPDPGQE), 1215–1223 (SLSPDLGQT), 1224–1232 (SLSPDLSQE), 1233–1241 (SLSPDLGQT), 1242–1250 (ALSPDPSQE), 1251–1259 (SLSPDLGQT), 1260–1268 (ALSPDPSQE), 1269–1277 (SLSPDLGQT), 1278–1286 (ALSPDPGQE), 1287–1295 (SLSPDLGQT), 1296–1304 (SLSPDLSQE), 1305–1313 (SLSPDLGQT), 1314–1322 (ALSPDPSQE), 1323–1331 (SLSPDLGQT), 1332–1340 (ALSPDPSQE), 1341–1349 (SLSPDLGQT), 1350–1358 (SLSPDLGQE), 1359–1367 (SLSPDLGQT), 1368–1376 (ALSPDPSQE), 1377–1385 (SLSPDLGQT), 1386–1394 (SLSPDLGQE), 1395–1403 (SLSPDLGQT), 1404–1412 (ALSPDLSQE), 1413–1421 (SLSPDLGQT), 1422–1430 (PLSPDLSLE), and 1431–1439 (SLSPDLSQL). The tract at residues 1124–1151 (SDPTHSTTAPSNRSPDPTHSTTAPSNRS) is 2 X 14 AA tandem repeats. The segment at 1188 to 1453 (ATSLDLSQPS…TSPPLDLNQT (266 aa)) is 30 X 9 AA approximate tandem repeats of [AS]-L-S-P-D-[LP]-[GS]-Q-[TE]. Polar residues-rich tracts occupy residues 1214–1234 (ESLSPDLGQTSLSPDLSQESL), 1241–1252 (TALSPDPSQESL), 1259–1270 (TALSPDPSQESL), 1286–1306 (ESLSPDLGQTSLSPDLSQESL), 1313–1324 (TALSPDPSQESL), 1331–1352 (TALSPDPSQESLSPDLGQTSLS), 1367–1388 (TALSPDPSQESLSPDLGQTSLS), and 1403–1414 (TALSPDLSQESL). The segment covering 1422–1441 (PLSPDLSLESLSPDLSQLDL) has biased composition (low complexity). A 2-29; truncated repeat occupies 1440–1444 (DLKQT). Residues 1442–1463 (KQTSPPLDLNQTSHTSESSQSL) show a composition bias toward polar residues. The stretch at 1445-1453 (SPPLDLNQT) is one 2-30 repeat. Residues N1451 and N1490 are each glycosylated (N-linked (GlcNAc...) asparagine). Y1513, Y1529, Y1537, and Y1541 each carry sulfotyrosine. N1550 and N1690 each carry an N-linked (GlcNAc...) asparagine glycan. Plastocyanin-like domains are found at residues 1569–1738 (NRKY…LLIC) and 1748–1890 (NMPV…FLIV). One can recognise an F5/8 type A 3 domain in the interval 1569–1890 (NRKYYYIAAE…AGMQTPFLIV (322 aa)). C1712 and C1738 are joined by a disulfide. Cu cation is bound by residues H1830 and H1832. N-linked (GlcNAc...) asparagine glycosylation is present at N1839. A Cu cation-binding site is contributed by D1872. 2 cysteine pairs are disulfide-bonded: C1894–C2048 and C2053–C2208. F5/8 type C domains follow at residues 1894–2048 (CKMP…LQGC) and 2053–2208 (CSTP…LFGC). N-linked (GlcNAc...) asparagine glycans are attached at residues N1997 and N2196.

The protein belongs to the multicopper oxidase family. As to quaternary structure, factor Va, the activated form of factor V, is composed of a heavy chain and a light chain, non-covalently bound. The interaction between the two chains is calcium-dependent. Forms heterodimer with SERPINA5. In terms of processing, thrombin activates factor V proteolytically to the active cofactor, factor Va (formation of a heavy chain at the N-terminus and a light chain at the C-terminus). Sulfation is required for efficient thrombin cleavage and activation and for full procoagulant activity. Post-translationally, activated protein C inactivates factor V and factor Va by proteolytic degradation.

The protein resides in the secreted. With respect to regulation, inhibited by SERPINA5. In terms of biological role, central regulator of hemostasis. It serves as a critical cofactor for the prothrombinase activity of factor Xa that results in the activation of prothrombin to thrombin. This chain is Coagulation factor V (F5), found in Bos taurus (Bovine).